Consider the following 117-residue polypeptide: uncharacterized protein (117 aa).

This sequence to H.influenzae HI_1162 and to HI_0925.

This is an uncharacterized protein from Escherichia coli (strain K12).